Reading from the N-terminus, the 342-residue chain is BAG family molecular chaperone regulator 1 (342 aa).

The interval 1–41 is disordered; the sequence is MMKMMRNKPTNLPTAGMTNGGRGSGGGGGGGGRESGGRDLE. Over residues 8–17 the composition is skewed to polar residues; that stretch reads KPTNLPTAGM. The segment covering 18–34 has biased composition (gly residues); it reads TNGGRGSGGGGGGGGRE. In terms of domain architecture, Ubiquitin-like spans 65–141; that stretch reads PMIRVRIKYG…MVLIEDPLSQ (77 aa). Residues 160–238 form the BAG domain; the sequence is AISDISLEVD…NYVETLDALK (79 aa). At Ser-298 the chain carries Phosphoserine.

As to quaternary structure, binds to the ATPase domain of HSP70/HSC70 chaperones.

Functionally, co-chaperone that regulates diverse cellular pathways, such as programmed cell death and stress responses. The polypeptide is BAG family molecular chaperone regulator 1 (BAG1) (Arabidopsis thaliana (Mouse-ear cress)).